A 276-amino-acid chain; its full sequence is Ribosomal RNA small subunit methyltransferase A (276 aa).

Residues asparagine 15, leucine 17, glycine 42, glutamate 63, aspartate 88, and asparagine 111 each contribute to the S-adenosyl-L-methionine site.

It belongs to the class I-like SAM-binding methyltransferase superfamily. rRNA adenine N(6)-methyltransferase family. RsmA subfamily.

The protein localises to the cytoplasm. It catalyses the reaction adenosine(1518)/adenosine(1519) in 16S rRNA + 4 S-adenosyl-L-methionine = N(6)-dimethyladenosine(1518)/N(6)-dimethyladenosine(1519) in 16S rRNA + 4 S-adenosyl-L-homocysteine + 4 H(+). Its function is as follows. Specifically dimethylates two adjacent adenosines (A1518 and A1519) in the loop of a conserved hairpin near the 3'-end of 16S rRNA in the 30S particle. May play a critical role in biogenesis of 30S subunits. The sequence is that of Ribosomal RNA small subunit methyltransferase A from Geobacter sulfurreducens (strain ATCC 51573 / DSM 12127 / PCA).